The primary structure comprises 201 residues: Recombination protein RecR (201 aa).

The segment at 57–72 (CADCRTFTEQEVCNIC) adopts a C4-type zinc-finger fold. In terms of domain architecture, Toprim spans 81-176 (GQICVVESPA…DASRIAHGVP (96 aa)).

It belongs to the RecR family.

Its function is as follows. May play a role in DNA repair. It seems to be involved in an RecBC-independent recombinational process of DNA repair. It may act with RecF and RecO. This chain is Recombination protein RecR, found in Klebsiella pneumoniae subsp. pneumoniae (strain ATCC 700721 / MGH 78578).